A 122-amino-acid polypeptide reads, in one-letter code: Serum amyloid A-3 protein (122 aa).

Positions 1 to 18 (MKPSIAIILCILILGVDS) are cleaved as a signal peptide. The tract at residues 87–122 (TGHGAEDSRADQFANEWGRSGKDPNHFRPAGLPKRY) is disordered.

This sequence belongs to the SAA family. In terms of tissue distribution, found in various tissues.

Its subcellular location is the secreted. Major acute phase reactant. Apolipoprotein of the HDL complex. In vitro exhibits antimicrobial activity against Escherichia coli, Streptococcus uberis and Pseudomonas aeruginosa. The chain is Serum amyloid A-3 protein (Saa3) from Mus musculus (Mouse).